Here is a 310-residue protein sequence, read N- to C-terminus: Coproporphyrin III ferrochelatase (310 aa).

Fe-coproporphyrin III is bound by residues Y13, R30, 46–47 (RY), S54, and Y125. Fe(2+) contacts are provided by H183 and E264.

It belongs to the ferrochelatase family.

The protein localises to the cytoplasm. It carries out the reaction Fe-coproporphyrin III + 2 H(+) = coproporphyrin III + Fe(2+). It participates in porphyrin-containing compound metabolism; protoheme biosynthesis. Functionally, involved in coproporphyrin-dependent heme b biosynthesis. Catalyzes the insertion of ferrous iron into coproporphyrin III to form Fe-coproporphyrin III. This is Coproporphyrin III ferrochelatase from Geobacillus sp. (strain WCH70).